The sequence spans 853 residues: Cytochrome P450 monooxygenase mpaDE (853 aa).

Residues 1 to 6 (MKSLSL) lie on the Lumenal side of the membrane. The chain crosses the membrane as a helical span at residues 7–29 (TWITAVAVVLYLVQRYVRSYWRL). At 30–853 (KDIPGPVLAK…DIENSIEGQK (824 aa)) the chain is on the cytoplasmic side. Residue cysteine 449 coordinates heme.

The protein belongs to the cytochrome P450 family. Heme is required as a cofactor.

It is found in the endoplasmic reticulum membrane. It carries out the reaction 5-methylorsellinate + reduced [NADPH--hemoprotein reductase] + O2 = 4,6-dihydroxy-2-(hydroxymethyl)-3-methylbenzoate + oxidized [NADPH--hemoprotein reductase] + H2O + H(+). The enzyme catalyses 4,6-dihydroxy-2-(hydroxymethyl)-3-methylbenzoate + H(+) = 5,7-dihydroxy-4-methylphthalide + H2O. It participates in secondary metabolite biosynthesis; terpenoid biosynthesis. Functionally, cytochrome P450 monooxygenase; part of the gene cluster that mediates the biosynthesis of mycophenolic acid (MPA), the first isolated antibiotic natural product in the world obtained from a culture of Penicillium brevicompactum in 1893. MpaDE is an endoplasmic reticulum-bound enzyme that catalyzes the conversion of 5-methylorsellinic acid (5MOA) into the phthalide compound 5,7-dihydroxy-4,6-dimethylphthalide (DHMP). MpaDE first catalyzes hydroxylation of 5-MOA to 4,6-dihydroxy-2-(hydroxymethyl)-3-methylbenzoic acid (DHMB), and then acts as a lactone synthase that catalyzes the ring closure to convert DHMB into DHMP. The first step of the pathway is the synthesis of 5-methylorsellinic acid (5MOA) by the cytosolic polyketide synthase mpaC. 5MOA is then converted to the phthalide compound 5,7-dihydroxy-4,6-dimethylphthalide (DHMP) by the endoplasmic reticulum-bound cytochrome P450 monooxygenase mpaDE. MpaDE first catalyzes hydroxylation of 5-MOA to 4,6-dihydroxy-2-(hydroxymethyl)-3-methylbenzoic acid (DHMB). MpaDE then acts as a lactone synthase that catalyzes the ring closure to convert DHMB into DHMP. The next step is the prenylation of DHMP by the Golgi apparatus-associated prenyltransferase mpaA to yield farnesyl-DHMP (FDHMP). The ER-bound oxygenase mpaB then mediates the oxidative cleavage the C19-C20 double bond in FDHMP to yield FDHMP-3C via a mycophenolic aldehyde intermediate. The O-methyltransferase mpaG catalyzes the methylation of FDHMP-3C to yield MFDHMP-3C. After the cytosolic methylation of FDHMP-3C, MFDHMP-3C enters into peroxisomes probably via free diffusion due to its low molecular weight. Upon a peroxisomal CoA ligation reaction, catalyzed by a beta-oxidation component enzyme acyl-CoA ligase ACL891, MFDHMP-3C-CoA would then be restricted to peroxisomes for the following beta-oxidation pathway steps. The peroxisomal beta-oxidation machinery than converts MFDHMP-3C-CoA into MPA_CoA, via a beta-oxidation chain-shortening process. Finally mpaH acts as a peroxisomal acyl-CoA hydrolase with high substrate specificity toward MPA-CoA to release the final product MPA. This is Cytochrome P450 monooxygenase mpaDE from Penicillium brevicompactum.